Consider the following 372-residue polypeptide: Tubby-like F-box protein 9 (372 aa).

The tract at residues methionine 1 to arginine 51 is disordered. The segment covering serine 7 to serine 18 has biased composition (low complexity). Residues glycine 40 to glutamate 49 are compositionally biased toward acidic residues. An F-box domain is found at glutamate 50–glycine 105.

It belongs to the TUB family. As to expression, ubiquitous.

The sequence is that of Tubby-like F-box protein 9 (TULP9) from Oryza sativa subsp. japonica (Rice).